The sequence spans 190 residues: Cytoplasmic envelopment protein 3 (190 aa).

G2 carries the N-myristoyl glycine; by host lipid modification. Residues 14 to 190 (GTTSGEPLKD…TKKPAASLPF (177 aa)) form a disordered region. The segment covering 30 to 43 (SLRSYDNIPPTSSS) has biased composition (polar residues). Acidic residues predominate over residues 44-58 (DEGEDDDDGEDDDNE). A compositionally biased stretch (basic and acidic residues) spans 80–90 (SHREATHDGPK). Residues 108–123 (KQSKKKKKPSKHHHHQ) are compositionally biased toward basic residues. A compositionally biased stretch (acidic residues) spans 130 to 139 (ETDDLDEEDT).

Belongs to the herpesviridae cytoplasmic envelopment protein 3 family. Interacts with cytoplasmic envelopment protein 2; this interaction is essential for the proper localization of each protein to the assembly complex and thus for the production of infectious virus. Post-translationally, myristoylation and palmitoylation (probably on one or more of the nearby cysteines at the N-terminus) enable membrane-binding and Golgi apparatus-specific targeting and are essential for efficient packaging. Phosphorylated. Phosphorylation does not seem to be required for recycling to the host Golgi apparatus. Packaging is selective for underphosphorylated forms.

The protein resides in the virion tegument. Its subcellular location is the virion membrane. It localises to the host cell membrane. It is found in the host Golgi apparatus membrane. In terms of biological role, plays an important role in the cytoplasmic envelopment of tegument proteins and capsids during the assembly and egress processes. Also participates in viral entry at the fusion step probably by regulating the core fusion machinery. The protein is Cytoplasmic envelopment protein 3 (UL99) of Human cytomegalovirus (strain Merlin) (HHV-5).